The primary structure comprises 147 residues: Ribonuclease H (147 aa).

Residues 1 to 142 (MTEIVEIFTD…ADALARSAIT (142 aa)) enclose the RNase H type-1 domain. Positions 10, 48, 70, and 134 each coordinate Mg(2+).

Belongs to the RNase H family. As to quaternary structure, monomer. Mg(2+) serves as cofactor.

The protein resides in the cytoplasm. It catalyses the reaction Endonucleolytic cleavage to 5'-phosphomonoester.. Functionally, endonuclease that specifically degrades the RNA of RNA-DNA hybrids. The sequence is that of Ribonuclease H from Nitrosococcus oceani (strain ATCC 19707 / BCRC 17464 / JCM 30415 / NCIMB 11848 / C-107).